The following is a 372-amino-acid chain: MNLEEENTIFKPLYSLKHSPINAYFSKNSDDFVVRERPLYEFSGKGEHLILHINKKDLTTNEALKILSEASGVKIRDFGYAGLKDKQGSTFQYLSMPKKFESFLSNFSHPKLKILEIFTHENKLRIGHLKGNSFFIRLKKVLPSDALKLEQALMNLDKQGFANYFGYQRFGKFGDNYKEGLEILRGKKMKNVKMKEFLISAFQSELFNRYLSKRVELSHFANDFSEKELIQIYKISKEEAKELKKQEQFFKLLKGEVLGHYPFGKCFLCEDLSAELGRFKARDISAMGLLIGAKAYETGEGLALNLENEIFKDTLEFKAKMQGSRRFMWGYLEELKWRYDEEKAHFCIEFFLQKGSYATVVLEEILHKNLFE.

Aspartate 85 acts as the Nucleophile in catalysis. In terms of domain architecture, TRUD spans 160-330; the sequence is GFANYFGYQR…MQGSRRFMWG (171 aa).

Belongs to the pseudouridine synthase TruD family.

The catalysed reaction is uridine(13) in tRNA = pseudouridine(13) in tRNA. Responsible for synthesis of pseudouridine from uracil-13 in transfer RNAs. This chain is tRNA pseudouridine synthase D, found in Campylobacter jejuni subsp. jejuni serotype O:2 (strain ATCC 700819 / NCTC 11168).